Here is a 358-residue protein sequence, read N- to C-terminus: Acid phosphatase (358 aa).

The signal sequence occupies residues 1-17; it reads MKFSTIALPLLASAALA. Asn-20, Asn-27, and Asn-32 each carry an N-linked (GlcNAc...) asparagine glycan. The interval 21–41 is disordered; that stretch reads SSHSGTNATSHNSTVPNENSK. Mg(2+) contacts are provided by Asp-49, Asp-50, and Ser-81. 2 N-linked (GlcNAc...) asparagine glycosylation sites follow: Asn-92 and Asn-145. Asn-156 contributes to the Mg(2+) binding site. The active site involves Ser-189. N-linked (GlcNAc...) asparagine glycosylation is found at Asn-199 and Asn-278.

Belongs to the SurE nucleotidase family. Requires Mg(2+) as cofactor.

It localises to the secreted. The catalysed reaction is a phosphate monoester + H2O = an alcohol + phosphate. In terms of biological role, probably serves to scavenge phosphorus for growing cells. This chain is Acid phosphatase (PHO2), found in Yarrowia lipolytica (strain CLIB 122 / E 150) (Yeast).